Here is a 77-residue protein sequence, read N- to C-terminus: Large ribosomal subunit protein bL28 (77 aa).

The protein belongs to the bacterial ribosomal protein bL28 family.

The protein is Large ribosomal subunit protein bL28 of Paracidovorax citrulli (strain AAC00-1) (Acidovorax citrulli).